The following is a 288-amino-acid chain: Eukaryotic translation initiation factor 3 subunit G (288 aa).

Disordered stretches follow at residues 1–33 (MSKL…NKDG) and 156–197 (DEPT…GGER). The 79-residue stretch at 208–286 (ATLRVTNVSE…LILRVEFAKR (79 aa)) folds into the RRM domain.

The protein belongs to the eIF-3 subunit G family. In terms of assembly, component of the eukaryotic translation initiation factor 3 (eIF-3) complex.

The protein localises to the cytoplasm. Functionally, RNA-binding component of the eukaryotic translation initiation factor 3 (eIF-3) complex, which is involved in protein synthesis of a specialized repertoire of mRNAs and, together with other initiation factors, stimulates binding of mRNA and methionyl-tRNAi to the 40S ribosome. The eIF-3 complex specifically targets and initiates translation of a subset of mRNAs involved in cell proliferation. This subunit can bind 18S rRNA. The sequence is that of Eukaryotic translation initiation factor 3 subunit G (tif35) from Aspergillus niger (strain ATCC MYA-4892 / CBS 513.88 / FGSC A1513).